Here is a 120-residue protein sequence, read N- to C-terminus: MFVNKKYTAKGKNLPSSPKKVRPIADNIRGKPYNEAVAILCSMPNKGAKLLGKVVKSAASNAMYHNRNLSEDMIFVKTVMVDDGRKRRSIWPRARGRADRLINRSCHIFVEVYEKMYGGE.

The disordered stretch occupies residues 1-25; the sequence is MFVNKKYTAKGKNLPSSPKKVRPIA.

It belongs to the universal ribosomal protein uL22 family. In terms of assembly, part of the 50S ribosomal subunit.

In terms of biological role, this protein binds specifically to 23S rRNA; its binding is stimulated by other ribosomal proteins, e.g. L4, L17, and L20. It is important during the early stages of 50S assembly. It makes multiple contacts with different domains of the 23S rRNA in the assembled 50S subunit and ribosome. Its function is as follows. The globular domain of the protein is located near the polypeptide exit tunnel on the outside of the subunit, while an extended beta-hairpin is found that lines the wall of the exit tunnel in the center of the 70S ribosome. The protein is Large ribosomal subunit protein uL22 of Borrelia duttonii (strain Ly).